Here is a 185-residue protein sequence, read N- to C-terminus: Ribosome-recycling factor (185 aa).

It belongs to the RRF family.

The protein localises to the cytoplasm. Its function is as follows. Responsible for the release of ribosomes from messenger RNA at the termination of protein biosynthesis. May increase the efficiency of translation by recycling ribosomes from one round of translation to another. In Vibrio cholerae serotype O1 (strain ATCC 39541 / Classical Ogawa 395 / O395), this protein is Ribosome-recycling factor.